The primary structure comprises 448 residues: Mitochondrial distribution and morphology protein 10 (448 aa).

Disordered stretches follow at residues 101-126 and 366-386; these read QIHPPLAPESPNESRHAEPNERSEKA and PPLPPSPVKGTSASAVTPAGE. The span at 112–126 shows a compositional bias: basic and acidic residues; it reads NESRHAEPNERSEKA.

It belongs to the MDM10 family. As to quaternary structure, component of the ER-mitochondria encounter structure (ERMES) or MDM complex, composed of MMM1, MDM10, MDM12 and MDM34. Associates with the mitochondrial outer membrane sorting assembly machinery SAM(core) complex.

The protein resides in the mitochondrion outer membrane. Component of the ERMES/MDM complex, which serves as a molecular tether to connect the endoplasmic reticulum and mitochondria. Components of this complex are involved in the control of mitochondrial shape and protein biogenesis and may function in phospholipid exchange. MDM10 is involved in the late assembly steps of the general translocase of the mitochondrial outer membrane (TOM complex). Functions in the TOM40-specific route of the assembly of outer membrane beta-barrel proteins, including the association of TOM40 with the receptor TOM22 and small TOM proteins. Can associate with the SAM(core) complex as well as the MDM12-MMM1 complex, both involved in late steps of the major beta-barrel assembly pathway, that is responsible for biogenesis of all outer membrane beta-barrel proteins. May act as a switch that shuttles between both complexes and channels precursor proteins into the TOM40-specific pathway. Plays a role in mitochondrial morphology and in the inheritance of mitochondria. This is Mitochondrial distribution and morphology protein 10 from Coccidioides immitis (strain RS) (Valley fever fungus).